Reading from the N-terminus, the 101-residue chain is Small ribosomal subunit protein uS14 (101 aa).

Belongs to the universal ribosomal protein uS14 family. In terms of assembly, part of the 30S ribosomal subunit. Contacts proteins S3 and S10.

Binds 16S rRNA, required for the assembly of 30S particles and may also be responsible for determining the conformation of the 16S rRNA at the A site. The protein is Small ribosomal subunit protein uS14 of Baumannia cicadellinicola subsp. Homalodisca coagulata.